Consider the following 868-residue polypeptide: Leucine--tRNA ligase (868 aa).

Residues 42–52 carry the 'HIGH' region motif; sequence PYPSGKLHMGH. The short motif at 627-631 is the 'KMSKS' region element; it reads KMSKS. Lys-630 is an ATP binding site.

It belongs to the class-I aminoacyl-tRNA synthetase family.

The protein localises to the cytoplasm. It catalyses the reaction tRNA(Leu) + L-leucine + ATP = L-leucyl-tRNA(Leu) + AMP + diphosphate. The sequence is that of Leucine--tRNA ligase from Pseudomonas putida (strain ATCC 47054 / DSM 6125 / CFBP 8728 / NCIMB 11950 / KT2440).